The following is a 497-amino-acid chain: MSIITMVWLMKVFVFVTLLSLVFVITESAPESALITKLPGFEGTFPSKHYSGYVTIDKEHGKNLWYYFIESEKNPSKDPVVLWLNGGPGCSSMDGFVYEHGPFNFELPKKNNSLPLLHLNPYSWSKVSNIIYLDSPVGVGFSYSNNKSDYITGDIKTAVDSHAFLLKWFQMFPEFQSNPFFISGESYAGVYVPTLASEVVIGNKNGVKPALNFKGYLVGNGVADPKFDGNAFVPFAHGMGLISDELFENVTKACKGNFYEIEGLECEEQYTKVNDDTNQLNIYNILEPCYHGTSLSAFDIRSLPSSLLQLGKTEKRLPIRKRMFGRAWPVRAPVHPGIVPSWSQLLADVTVPCIDDRVATAWLNDPEIRKAIHTKEESEIGRWELCSGKLSFYHDAGSMIDFHRNLTLSGYRALIYSGDHDMCVPFTGSEAWTKSLGYKVIDEWRAWISNDQVAGYTQGYANNLTFLTIKGAGHTVPEYKPREALDFYSRFLEGSKI.

The first 29 residues, 1–29 (MSIITMVWLMKVFVFVTLLSLVFVITESA), serve as a signal peptide directing secretion. Disulfide bonds link cysteine 90/cysteine 386, cysteine 254/cysteine 266, and cysteine 289/cysteine 353. Residues asparagine 111 and asparagine 146 are each glycosylated (N-linked (GlcNAc...) asparagine). Serine 186 is an active-site residue. A glycan (N-linked (GlcNAc...) asparagine) is linked at asparagine 249. Asparagine 405 is a glycosylation site (N-linked (GlcNAc...) asparagine). Aspartate 421 is an active-site residue. A glycan (N-linked (GlcNAc...) asparagine) is linked at asparagine 463. Histidine 474 is a catalytic residue. The short motif at 495-497 (SKI) is the Microbody targeting signal element.

This sequence belongs to the peptidase S10 family. Ubiquitous.

The protein localises to the secreted. Its function is as follows. Probable carboxypeptidase. The protein is Serine carboxypeptidase-like 20 (SCPL20) of Arabidopsis thaliana (Mouse-ear cress).